Reading from the N-terminus, the 155-residue chain is Large ribosomal subunit protein uL22 (155 aa).

It belongs to the universal ribosomal protein uL22 family. As to quaternary structure, part of the 50S ribosomal subunit.

Its function is as follows. This protein binds specifically to 23S rRNA. It makes multiple contacts with different domains of the 23S rRNA in the assembled 50S subunit and ribosome. In terms of biological role, the globular domain of the protein is located near the polypeptide exit tunnel on the outside of the subunit, while an extended beta-hairpin is found that lines the wall of the exit tunnel in the center of the 70S ribosome. The protein is Large ribosomal subunit protein uL22 of Pyrococcus horikoshii (strain ATCC 700860 / DSM 12428 / JCM 9974 / NBRC 100139 / OT-3).